Consider the following 134-residue polypeptide: Small ribosomal subunit protein uS8 (134 aa).

Belongs to the universal ribosomal protein uS8 family. Part of the 30S ribosomal subunit. Contacts proteins S5 and S12.

Functionally, one of the primary rRNA binding proteins, it binds directly to 16S rRNA central domain where it helps coordinate assembly of the platform of the 30S subunit. The protein is Small ribosomal subunit protein uS8 of Kosmotoga olearia (strain ATCC BAA-1733 / DSM 21960 / TBF 19.5.1).